The following is a 509-amino-acid chain: Kynureninase 1 (509 aa).

Pyridoxal 5'-phosphate contacts are provided by residues leucine 169, threonine 170, 197–200 (FPSD), aspartate 283, histidine 286, and tyrosine 308. Lysine 309 is subject to N6-(pyridoxal phosphate)lysine. Positions 349 and 377 each coordinate pyridoxal 5'-phosphate.

Belongs to the kynureninase family. As to quaternary structure, homodimer. The cofactor is pyridoxal 5'-phosphate.

The protein localises to the cytoplasm. It carries out the reaction L-kynurenine + H2O = anthranilate + L-alanine + H(+). The enzyme catalyses 3-hydroxy-L-kynurenine + H2O = 3-hydroxyanthranilate + L-alanine + H(+). The protein operates within amino-acid degradation; L-kynurenine degradation; L-alanine and anthranilate from L-kynurenine: step 1/1. It functions in the pathway cofactor biosynthesis; NAD(+) biosynthesis; quinolinate from L-kynurenine: step 2/3. Its function is as follows. Catalyzes the cleavage of L-kynurenine (L-Kyn) and L-3-hydroxykynurenine (L-3OHKyn) into anthranilic acid (AA) and 3-hydroxyanthranilic acid (3-OHAA), respectively. This is Kynureninase 1 (bna5-1) from Aspergillus fumigatus (strain CBS 144.89 / FGSC A1163 / CEA10) (Neosartorya fumigata).